We begin with the raw amino-acid sequence, 618 residues long: Membrane protein insertase YidC (618 aa).

6 helical membrane-spanning segments follow: residues 3–23, 363–383, 439–459, 478–498, 520–540, and 545–565; these read KNTI…SFLS, WGLS…IVVF, LPML…PSAI, FITF…FCLL, PQMA…LFVL, and SGLN…MIIL.

Belongs to the OXA1/ALB3/YidC family. Type 1 subfamily. As to quaternary structure, interacts with the Sec translocase complex via SecD. Specifically interacts with transmembrane segments of nascent integral membrane proteins during membrane integration.

It is found in the cell membrane. In terms of biological role, required for the insertion and/or proper folding and/or complex formation of integral membrane proteins into the membrane. Involved in integration of membrane proteins that insert both dependently and independently of the Sec translocase complex, as well as at least some lipoproteins. Aids folding of multispanning membrane proteins. The sequence is that of Membrane protein insertase YidC from Bacteroides fragilis (strain YCH46).